The chain runs to 354 residues: Homeobox protein Nkx-2.4 (354 aa).

A DNA-binding region (homeobox) is located at residues 189–248 (RRKRRVLFSQAQVYELERRFKQQKYLSAPEREHLASMIHLTPTQVKIWFQNHRYKMKRQA). Residues 246-329 (RQAKDKAAQQ…PALHGPGGGL (84 aa)) are disordered. The segment covering 263–272 (GPPPPPPPSP) has biased composition (pro residues).

The protein belongs to the NK-2 homeobox family.

It is found in the nucleus. Probable transcription factor. The protein is Homeobox protein Nkx-2.4 (NKX2-4) of Homo sapiens (Human).